The following is a 375-amino-acid chain: 23S rRNA (uracil(747)-C(5))-methyltransferase RlmC (375 aa).

Residues cysteine 3, cysteine 11, cysteine 14, and cysteine 87 each contribute to the [4Fe-4S] cluster site. Positions 212, 241, 262, and 307 each coordinate S-adenosyl-L-methionine. Cysteine 334 acts as the Nucleophile in catalysis.

Belongs to the class I-like SAM-binding methyltransferase superfamily. RNA M5U methyltransferase family. RlmC subfamily.

The enzyme catalyses uridine(747) in 23S rRNA + S-adenosyl-L-methionine = 5-methyluridine(747) in 23S rRNA + S-adenosyl-L-homocysteine + H(+). Its function is as follows. Catalyzes the formation of 5-methyl-uridine at position 747 (m5U747) in 23S rRNA. The polypeptide is 23S rRNA (uracil(747)-C(5))-methyltransferase RlmC (Salmonella enteritidis PT4 (strain P125109)).